The chain runs to 490 residues: Metal cation symporter ZIP14 (490 aa).

A signal peptide spans 1–28 (MKLLHPAFQSCLLLTLLGLWRTTPEAHA). The Extracellular segment spans residues 29–155 (SSPGAPAISA…PSAVEVWGYG (127 aa)). N75, N85, and N100 each carry an N-linked (GlcNAc...) asparagine glycan. Residues 156 to 176 (LLCVTVISLCSLLGASVVPFM) traverse the membrane as a helical segment. At 177-184 (KKTFYKRL) the chain is on the cytoplasmic side. The chain crosses the membrane as a helical span at residues 185-205 (LLYFIALAIGTLYSNALFQLI). Over 206–222 (PEAFGFNPLEDYYVSKS) the chain is Extracellular. The chain crosses the membrane as a helical span at residues 223–243 (AVVFGGFYLFFFTEKILKILL). The Cytoplasmic segment spans residues 244-395 (KQKNEHHHGH…LLNAGMSIQQ (152 aa)). Positions 249–256 (HHHGHSHY) match the HHHGHXHX-motif motif. The short motif at 374–379 (EEFPHE) is the XEXPHE-motif element. A helical transmembrane segment spans residues 396–416 (ALFFNFLSACCCYLGLAFGIL). At 417–422 (AGSHFS) the chain is on the extracellular side. A helical transmembrane segment spans residues 423–443 (ANWIFALAGGMFLYISLADMF). The Cytoplasmic segment spans residues 444–458 (PEMNEVCQEDERKGS). A helical membrane pass occupies residues 459-479 (ILIPFVIQNLGLLTGFTIMVV). At 480-490 (LTMYSGQIQIG) the chain is on the extracellular side.

It belongs to the ZIP transporter (TC 2.A.5) family. As to quaternary structure, homotrimer. In terms of processing, ubiquitinated. Ubiquitination occurs upon iron depletion. The ubiquitinated form undergoes proteasomal degradation. Post-translationally, N-glycosylated. N-glycosylation at Asn-100 is required for iron-regulated extraction of the transporter from membranes and subsequent proteasomal degradation.

The protein resides in the cell membrane. Its subcellular location is the apical cell membrane. It localises to the basolateral cell membrane. The protein localises to the early endosome membrane. It is found in the late endosome membrane. The protein resides in the lysosome membrane. The catalysed reaction is Zn(2+)(out) + 2 hydrogencarbonate(out) = Zn(2+)(in) + 2 hydrogencarbonate(in). It carries out the reaction Mn(2+)(out) + 2 hydrogencarbonate(out) = Mn(2+)(in) + 2 hydrogencarbonate(in). The enzyme catalyses Fe(2+)(out) + 2 hydrogencarbonate(out) = Fe(2+)(in) + 2 hydrogencarbonate(in). It catalyses the reaction Cd(2+)(out) + 2 hydrogencarbonate(out) = Cd(2+)(in) + 2 hydrogencarbonate(in). Electroneutral transporter of the plasma membrane mediating the cellular uptake of the divalent metal cations zinc, manganese and iron that are important for tissue homeostasis, metabolism, development and immunity. Functions as an energy-dependent symporter, transporting through the membranes an electroneutral complex composed of a divalent metal cation and two bicarbonate anions. Beside these endogenous cellular substrates, can also import cadmium a non-essential metal which is cytotoxic and carcinogenic. Controls the cellular uptake by the intestinal epithelium of systemic zinc, which is in turn required to maintain tight junctions and the intestinal permeability. Modifies the activity of zinc-dependent phosphodiesterases, thereby indirectly regulating G protein-coupled receptor signaling pathways important for gluconeogenesis and chondrocyte differentiation. Regulates insulin receptor signaling, glucose uptake, glycogen synthesis and gluconeogenesis in hepatocytes through the zinc-dependent intracellular catabolism of insulin. Through zinc cellular uptake also plays a role in the adaptation of cells to endoplasmic reticulum stress. Major manganese transporter of the basolateral membrane of intestinal epithelial cells, it plays a central role in manganese systemic homeostasis through intestinal manganese uptake. Also involved in manganese extracellular uptake by cells of the blood-brain barrier. May also play a role in manganese and zinc homeostasis participating in their elimination from the blood through the hepatobiliary excretion. Also functions in the extracellular uptake of free iron. May also function intracellularly and mediate the transport from endosomes to cytosol of iron endocytosed by transferrin. Plays a role in innate immunity by regulating the expression of cytokines by activated macrophages. The chain is Metal cation symporter ZIP14 from Pongo abelii (Sumatran orangutan).